Reading from the N-terminus, the 61-residue chain is Small ribosomal subunit protein uS14 (61 aa).

Zn(2+)-binding residues include cysteine 24, cysteine 27, cysteine 40, and cysteine 43.

This sequence belongs to the universal ribosomal protein uS14 family. Zinc-binding uS14 subfamily. In terms of assembly, part of the 30S ribosomal subunit. Contacts proteins S3 and S10. Zn(2+) serves as cofactor.

Binds 16S rRNA, required for the assembly of 30S particles and may also be responsible for determining the conformation of the 16S rRNA at the A site. This Mycoplasmopsis pulmonis (strain UAB CTIP) (Mycoplasma pulmonis) protein is Small ribosomal subunit protein uS14.